The sequence spans 330 residues: MTNNRVRVAVTGAAGQIGYALVFRIASGQMFGPNTEVELNLLELEPALPSLEGVAMELDDCAFPLLKRIVCTADLNKAMDGVNWALLVGSVPRKQGMERSDLLQINGGIFTKQGQAINDYASDDVRVFVVGNPCNTNCLIAMNHAKDVPSDRFYAMTTLDELRARTQLAKKAGVDITAVTQMTIWGNHSATQYPDFYNAKINGTSAARVINDQTWLKETFVSTVQQRGAAVIKARGSSSAASAANAIITGVNHLVTDTPAGESFSMCRRSKGEYGVDEGLIFSFPCRREHGELKVVENMEFNDFGRERFNITLNELRSERDTVKSLGLLD.

12-18 is an NAD(+) binding site; that stretch reads GAAGQIG. Substrate-binding residues include arginine 93 and arginine 99. NAD(+) is bound by residues asparagine 106, glutamine 113, and 130–132; that span reads VGN. Positions 132 and 163 each coordinate substrate. Histidine 188 functions as the Proton acceptor in the catalytic mechanism.

Belongs to the LDH/MDH superfamily. MDH type 2 family.

It carries out the reaction (S)-malate + NAD(+) = oxaloacetate + NADH + H(+). Its function is as follows. Catalyzes the reversible oxidation of malate to oxaloacetate. The sequence is that of Malate dehydrogenase from Legionella pneumophila (strain Lens).